Here is a 367-residue protein sequence, read N- to C-terminus: uncharacterized protein (367 aa).

Belongs to the Gfo/Idh/MocA family.

This is an uncharacterized protein from Streptococcus pneumoniae serotype 4 (strain ATCC BAA-334 / TIGR4).